A 192-amino-acid chain; its full sequence is Thiamine transporter ThiT (192 aa).

A run of 6 helical transmembrane segments spans residues 10–30 (LIEIAIMTAAAVILDIVSGMF), 31–51 (LSMPQGGSVSIMMIPIFLISF), 57–77 (AGLTTGLLTGLVQIAIGNLFA), 81–101 (VQLLLDYIVAFAAIGISGCFA), 123–143 (AVFIGSLLRYAAHVISGAVFF), and 164–184 (YMVPSFIICAIVLCLLFMTAP).

It belongs to the vitamin uptake transporter (VUT/ECF) (TC 2.A.88) family. Thiamine transporter subfamily. Forms a stable energy-coupling factor (ECF) transporter complex composed of a membrane-embedded substrate-binding protein (S component), two ATP-binding proteins (A components) and a transmembrane protein (T component).

The protein resides in the cell membrane. Functionally, probably a thiamine-binding protein that interacts with the energy-coupling factor (ECF) ABC-transporter complex. Unlike classic ABC transporters this ECF transporter provides the energy necessary to transport a number of different substrates. The substrates themselves are bound by transmembrane, not extracytoplasmic soluble proteins. In Bacillus subtilis (strain 168), this protein is Thiamine transporter ThiT (thiT).